The chain runs to 144 residues: Large ribosomal subunit protein uL16 (144 aa).

It belongs to the universal ribosomal protein uL16 family. Part of the 50S ribosomal subunit.

Its function is as follows. Binds 23S rRNA and is also seen to make contacts with the A and possibly P site tRNAs. The protein is Large ribosomal subunit protein uL16 of Bacillus cereus (strain ATCC 10987 / NRS 248).